A 618-amino-acid chain; its full sequence is Methionine--tRNA ligase (618 aa).

Residues 12–22 (YYVNAEPHLGH) carry the 'HIGH' region motif. Positions 127, 130, 144, and 147 each coordinate Zn(2+). The 'KMSKS' region motif lies at 297-301 (KMSKT). Lys300 is an ATP binding site. The 101-residue stretch at 518–618 (DFAKVELRVA…GEVPPGAVVK (101 aa)) folds into the tRNA-binding domain.

Belongs to the class-I aminoacyl-tRNA synthetase family. MetG type 2A subfamily. As to quaternary structure, homodimer. It depends on Zn(2+) as a cofactor.

The protein resides in the cytoplasm. The catalysed reaction is tRNA(Met) + L-methionine + ATP = L-methionyl-tRNA(Met) + AMP + diphosphate. Functionally, is required not only for elongation of protein synthesis but also for the initiation of all mRNA translation through initiator tRNA(fMet) aminoacylation. This chain is Methionine--tRNA ligase (metG), found in Thermus thermophilus (strain ATCC 27634 / DSM 579 / HB8).